We begin with the raw amino-acid sequence, 481 residues long: Probable glycine dehydrogenase (decarboxylating) subunit 2 (481 aa).

Positions Met-1–Ile-26 are disordered. Lys-263 is modified (N6-(pyridoxal phosphate)lysine).

This sequence belongs to the GcvP family. C-terminal subunit subfamily. The glycine cleavage system is composed of four proteins: P, T, L and H. In this organism, the P 'protein' is a heterodimer of two subunits. The cofactor is pyridoxal 5'-phosphate.

The catalysed reaction is N(6)-[(R)-lipoyl]-L-lysyl-[glycine-cleavage complex H protein] + glycine + H(+) = N(6)-[(R)-S(8)-aminomethyldihydrolipoyl]-L-lysyl-[glycine-cleavage complex H protein] + CO2. Functionally, the glycine cleavage system catalyzes the degradation of glycine. The P protein binds the alpha-amino group of glycine through its pyridoxal phosphate cofactor; CO(2) is released and the remaining methylamine moiety is then transferred to the lipoamide cofactor of the H protein. This Francisella tularensis subsp. mediasiatica (strain FSC147) protein is Probable glycine dehydrogenase (decarboxylating) subunit 2.